The sequence spans 219 residues: Ribose-5-phosphate isomerase A (219 aa).

Residues 28 to 31 (TGST), 81 to 84 (DGAD), and 94 to 97 (KGGG) contribute to the substrate site. Glutamate 103 acts as the Proton acceptor in catalysis. Residue lysine 121 participates in substrate binding.

Belongs to the ribose 5-phosphate isomerase family. In terms of assembly, homodimer.

The enzyme catalyses aldehydo-D-ribose 5-phosphate = D-ribulose 5-phosphate. Its pathway is carbohydrate degradation; pentose phosphate pathway; D-ribose 5-phosphate from D-ribulose 5-phosphate (non-oxidative stage): step 1/1. Catalyzes the reversible conversion of ribose-5-phosphate to ribulose 5-phosphate. This Pectobacterium atrosepticum (strain SCRI 1043 / ATCC BAA-672) (Erwinia carotovora subsp. atroseptica) protein is Ribose-5-phosphate isomerase A.